Here is a 555-residue protein sequence, read N- to C-terminus: Membrane protein insertase YidC (555 aa).

Residues 7 to 24 (ILWVIFSMSLVLLYDNWQ) form a helical membrane-spanning segment. 2 stretches are compositionally biased toward low complexity: residues 40 to 54 (QQAAPAGAGGATPQA) and 64 to 81 (AAPGTVPAAPQAAAQPVG). The segment at 40 to 81 (QQAAPAGAGGATPQADVPKANATNAAPGTVPAAPQAAAQPVG) is disordered. The next 5 membrane-spanning stretches (helical) occupy residues 334–354 (LELVKDYGWLTILAKPLFWLL), 360–380 (FLGNWGWSIIGLTVLIKLVFF), 430–450 (LGGCLPIVIQIPVFIALYWVL), 468–488 (LSVPDPFYILPIVMAVSMFVQ), and 503–523 (VMMIMPLVFSFMFFFFPAGLV).

This sequence belongs to the OXA1/ALB3/YidC family. Type 1 subfamily. In terms of assembly, interacts with the Sec translocase complex via SecD. Specifically interacts with transmembrane segments of nascent integral membrane proteins during membrane integration.

It is found in the cell inner membrane. In terms of biological role, required for the insertion and/or proper folding and/or complex formation of integral membrane proteins into the membrane. Involved in integration of membrane proteins that insert both dependently and independently of the Sec translocase complex, as well as at least some lipoproteins. Aids folding of multispanning membrane proteins. This is Membrane protein insertase YidC from Cupriavidus metallidurans (strain ATCC 43123 / DSM 2839 / NBRC 102507 / CH34) (Ralstonia metallidurans).